A 154-amino-acid chain; its full sequence is MKILKGTASARGMRVAIVGACFNGPIADALVSGAQQTFLDLGGSEDMLTVVRVPGSFEIPCTLKKLLSSGMEYHAIVACGVLIKGETSHYDLIADQVAARVSELSVEYGLPITFSVITAPSVDSAWQRAGIKGSHLGVSGMETALEMANLFEKL.

5-amino-6-(D-ribitylamino)uracil is bound by residues phenylalanine 22, 56–58 (SFE), and 81–83 (VLI). 86–87 (ET) is a binding site for (2S)-2-hydroxy-3-oxobutyl phosphate. Catalysis depends on histidine 89, which acts as the Proton donor. 5-amino-6-(D-ribitylamino)uracil is bound at residue phenylalanine 114. Residue arginine 128 participates in (2S)-2-hydroxy-3-oxobutyl phosphate binding.

This sequence belongs to the DMRL synthase family.

It carries out the reaction (2S)-2-hydroxy-3-oxobutyl phosphate + 5-amino-6-(D-ribitylamino)uracil = 6,7-dimethyl-8-(1-D-ribityl)lumazine + phosphate + 2 H2O + H(+). It participates in cofactor biosynthesis; riboflavin biosynthesis; riboflavin from 2-hydroxy-3-oxobutyl phosphate and 5-amino-6-(D-ribitylamino)uracil: step 1/2. Catalyzes the formation of 6,7-dimethyl-8-ribityllumazine by condensation of 5-amino-6-(D-ribitylamino)uracil with 3,4-dihydroxy-2-butanone 4-phosphate. This is the penultimate step in the biosynthesis of riboflavin. The chain is 6,7-dimethyl-8-ribityllumazine synthase from Chlamydia felis (strain Fe/C-56) (Chlamydophila felis).